The following is a 100-amino-acid chain: Omega toxin Ap2 (100 aa).

The first 22 residues, Met-1–Ala-22, serve as a signal peptide directing secretion. A propeptide spanning residues Asp-23–Arg-57 is cleaved from the precursor. Disulfide bonds link Cys-58–Cys-74, Cys-65–Cys-79, and Cys-73–Cys-94. At Ser-99 the chain carries Serine amide.

Belongs to the neurotoxin 14 (magi-1) family. 08 (Ltx-4) subfamily. Expressed by the venom duct.

The protein localises to the secreted. Its function is as follows. Inhibits 31.17% of Cav2.1/CACNA1A current at 1 uM concentration. The chain is Omega toxin Ap2 from Acanthoscurria paulensis (Brazilian giant black tarantula spider).